A 344-amino-acid chain; its full sequence is MSNTVLVSGASGFIALHILSQLLKQDYKVIGTVRSHEKEAKLLRQFQHNPNLTLEIVPDISHPNAFDKVLQKRGREIRYVLHTASPFHYDTTEYEKDLLIPALEGTKNILNSIKKYAADTVERVVVTSSCTAIITLAKMDDPSVVFTEESWNEATWESCQIDGINAYFASKKFAEKAAWEFTKENEDHIKFKLTTVNPSLLFGPQLFDEDVHGHLNTSCEMINGLIHTPVNASVPDFHSIFIDVRDVALAHLYAFQKENTAGKRLVVTNGKFGNQDILDILNEDFPQLRGLIPLGKPGTGDQVIDRGSTTDNSATRKILGFEFRSLHESVHDTAAQILKKQNRL.

The NADP(+) site is built by Lys-38 and Tyr-167.

The protein belongs to the NAD(P)-dependent epimerase/dehydratase family. Dihydroflavonol-4-reductase subfamily.

This is an uncharacterized protein from Saccharomyces cerevisiae (strain ATCC 204508 / S288c) (Baker's yeast).